Consider the following 86-residue polypeptide: Small ribosomal subunit protein bS20 (86 aa).

Positions 1–27 (MANSKSAKKRAIQAEKRRQHNASRRSM) are enriched in basic residues. The segment at 1–28 (MANSKSAKKRAIQAEKRRQHNASRRSMM) is disordered.

It belongs to the bacterial ribosomal protein bS20 family.

In terms of biological role, binds directly to 16S ribosomal RNA. This Vibrio parahaemolyticus serotype O3:K6 (strain RIMD 2210633) protein is Small ribosomal subunit protein bS20.